We begin with the raw amino-acid sequence, 75 residues long: Rugosin-LK1 (75 aa).

Residues 1-22 (MFTMKKSLLFLFFLGTISLSFC) form the signal peptide. The propeptide occupies 23 to 40 (EEERSADEDDEGEMTEEE).

In terms of tissue distribution, expressed by the skin glands.

The protein localises to the secreted. In terms of biological role, has antimicrobial activity against Gram-positive bacteria S.aureus ATCC 2592 (MIC=10.0 uM), S.aureus ATCC 43300 (MIC=15.0 uM) and B.subtilis (MIC=40.0 uM), against Gram-negative bacteria E.coli ML-35P (MIC=10.0 uM), P.aeruginosa PA01 (MIC=5.0 uM) and P.aeruginosa ATCC 27853 (MIC=5.0 uM) and against fungus C.albicans ATCC 2002 (MIC=10.0 uM). This Limnonectes kuhlii (Kuhl's Creek frog) protein is Rugosin-LK1.